Reading from the N-terminus, the 252-residue chain is Small ribosomal subunit protein uS2 (252 aa).

Belongs to the universal ribosomal protein uS2 family.

In Ruminiclostridium cellulolyticum (strain ATCC 35319 / DSM 5812 / JCM 6584 / H10) (Clostridium cellulolyticum), this protein is Small ribosomal subunit protein uS2.